We begin with the raw amino-acid sequence, 177 residues long: MSRVAKNPVKLPAGVEVKFAGQQLSVKGAKGTLELNIHSSVEIVEEAGELRFAARNGDQQTRAMAGTTRALVNNMVQGVSQGFERKLQLVGVGYKAQAKGTVLNLALGFSHPVDYELPEGITAETPSQTDILIKGIDKQLVGQVAAEIRDFRPPEPYKGKGVRYADEVVRRKEAKKK.

Belongs to the universal ribosomal protein uL6 family. As to quaternary structure, part of the 50S ribosomal subunit.

Its function is as follows. This protein binds to the 23S rRNA, and is important in its secondary structure. It is located near the subunit interface in the base of the L7/L12 stalk, and near the tRNA binding site of the peptidyltransferase center. The sequence is that of Large ribosomal subunit protein uL6 from Pseudomonas fluorescens (strain SBW25).